We begin with the raw amino-acid sequence, 231 residues long: 7-cyano-7-deazaguanine synthase (231 aa).

7–17 is a binding site for ATP; that stretch reads LSSGLDSVAAL. Zn(2+)-binding residues include C195, C203, C206, and C209.

Belongs to the QueC family. Zn(2+) is required as a cofactor.

It catalyses the reaction 7-carboxy-7-deazaguanine + NH4(+) + ATP = 7-cyano-7-deazaguanine + ADP + phosphate + H2O + H(+). The protein operates within purine metabolism; 7-cyano-7-deazaguanine biosynthesis. Catalyzes the ATP-dependent conversion of 7-carboxy-7-deazaguanine (CDG) to 7-cyano-7-deazaguanine (preQ(0)). In Methanosarcina mazei (strain ATCC BAA-159 / DSM 3647 / Goe1 / Go1 / JCM 11833 / OCM 88) (Methanosarcina frisia), this protein is 7-cyano-7-deazaguanine synthase.